The sequence spans 284 residues: uncharacterized protein (284 aa).

Residues 1 to 21 (MKTTMLMLVLLVCSYIHYVCA) form the signal peptide. 3 consecutive transmembrane segments (helical) span residues 88 to 108 (AGPFAISQVFGPAGRLYFLWA), 144 to 164 (ALGVYPYVPTLTGFSTFLGVW), and 212 to 232 (VFTTFAGPPIATSTVFASPTY).

It is found in the membrane. This is an uncharacterized protein from Schizosaccharomyces pombe (strain 972 / ATCC 24843) (Fission yeast).